Consider the following 198-residue polypeptide: MICOS complex subunit Mic26 (198 aa).

The first 23 residues, methionine 1–alanine 23, serve as a signal peptide directing secretion. A glycan (N-linked (GlcNAc...) asparagine) is linked at asparagine 63. Residues proline 108–alanine 128 traverse the membrane as a helical segment.

Belongs to the apolipoprotein O/MICOS complex subunit Mic27 family. In terms of assembly, component of the mitochondrial contact site and cristae organizing system (MICOS) complex, composed of at least MICOS10/MIC10, CHCHD3/MIC19, CHCHD6/MIC25, APOOL/MIC27, IMMT/MIC60, APOO/MIC23/MIC26 and MICOS13/MIC13. This complex was also known under the names MINOS or MitOS complex. The MICOS complex associates with mitochondrial outer membrane proteins SAMM50, MTX1 and MTX2 (together described as components of the mitochondrial outer membrane sorting assembly machinery (SAM) complex) and DNAJC11, mitochondrial inner membrane protein TMEM11 and with HSPA9. The MICOS and SAM complexes together with DNAJC11 are part of a large protein complex spanning both membranes termed the mitochondrial intermembrane space bridging (MIB) complex. Interacts with IMMT/MIC60. Interacts with MICOS10/MIC10 and APOOL/MIC27.

It localises to the mitochondrion inner membrane. Its subcellular location is the mitochondrion. The protein localises to the endoplasmic reticulum membrane. The protein resides in the golgi apparatus membrane. Its function is as follows. Component of the MICOS complex, a large protein complex of the mitochondrial inner membrane that plays crucial roles in the maintenance of crista junctions, inner membrane architecture, and formation of contact sites to the outer membrane. Plays a crucial role in crista junction formation and mitochondrial function. Can induce cardiac lipotoxicity by enhancing mitochondrial respiration and fatty acid metabolism in cardiac myoblasts. Promotes cholesterol efflux from macrophage cells. Detected in HDL, LDL and VLDL. Secreted by a microsomal triglyceride transfer protein (MTTP)-dependent mechanism, probably as a VLDL-associated protein that is subsequently transferred to HDL. This Mus musculus (Mouse) protein is MICOS complex subunit Mic26 (Apoo).